We begin with the raw amino-acid sequence, 221 residues long: Crossover junction endodeoxyribonuclease RuvC (221 aa).

Active-site residues include Asp12, Glu73, and Asp146. Mg(2+) contacts are provided by Asp12, Glu73, and Asp146. The tract at residues 169-221 is disordered; it reads SQYSEQELEKRRRVQQGKLGKAKSTYNAEQAQSHASDPAKAAHPSQFQRTDTN. Residues 192–203 show a composition bias toward polar residues; sequence STYNAEQAQSHA.

This sequence belongs to the RuvC family. As to quaternary structure, homodimer which binds Holliday junction (HJ) DNA. The HJ becomes 2-fold symmetrical on binding to RuvC with unstacked arms; it has a different conformation from HJ DNA in complex with RuvA. In the full resolvosome a probable DNA-RuvA(4)-RuvB(12)-RuvC(2) complex forms which resolves the HJ. The cofactor is Mg(2+).

It is found in the cytoplasm. The catalysed reaction is Endonucleolytic cleavage at a junction such as a reciprocal single-stranded crossover between two homologous DNA duplexes (Holliday junction).. In terms of biological role, the RuvA-RuvB-RuvC complex processes Holliday junction (HJ) DNA during genetic recombination and DNA repair. Endonuclease that resolves HJ intermediates. Cleaves cruciform DNA by making single-stranded nicks across the HJ at symmetrical positions within the homologous arms, yielding a 5'-phosphate and a 3'-hydroxyl group; requires a central core of homology in the junction. The consensus cleavage sequence is 5'-(A/T)TT(C/G)-3'. Cleavage occurs on the 3'-side of the TT dinucleotide at the point of strand exchange. HJ branch migration catalyzed by RuvA-RuvB allows RuvC to scan DNA until it finds its consensus sequence, where it cleaves and resolves the cruciform DNA. The chain is Crossover junction endodeoxyribonuclease RuvC from Corynebacterium glutamicum (strain ATCC 13032 / DSM 20300 / JCM 1318 / BCRC 11384 / CCUG 27702 / LMG 3730 / NBRC 12168 / NCIMB 10025 / NRRL B-2784 / 534).